A 262-amino-acid polypeptide reads, in one-letter code: tRNA pseudouridine synthase A (262 aa).

D51 functions as the Nucleophile in the catalytic mechanism. Y109 lines the substrate pocket.

The protein belongs to the tRNA pseudouridine synthase TruA family. Homodimer.

The catalysed reaction is uridine(38/39/40) in tRNA = pseudouridine(38/39/40) in tRNA. Its function is as follows. Formation of pseudouridine at positions 38, 39 and 40 in the anticodon stem and loop of transfer RNAs. In Aliivibrio salmonicida (strain LFI1238) (Vibrio salmonicida (strain LFI1238)), this protein is tRNA pseudouridine synthase A.